The chain runs to 203 residues: FMN-dependent NADH:quinone oxidoreductase 5 (203 aa).

Residues Ser-9, 15 to 17 (SAS), 95 to 98 (MYNF), and 139 to 142 (TSGG) contribute to the FMN site.

The protein belongs to the azoreductase type 1 family. In terms of assembly, homodimer. The cofactor is FMN.

It carries out the reaction 2 a quinone + NADH + H(+) = 2 a 1,4-benzosemiquinone + NAD(+). It catalyses the reaction N,N-dimethyl-1,4-phenylenediamine + anthranilate + 2 NAD(+) = 2-(4-dimethylaminophenyl)diazenylbenzoate + 2 NADH + 2 H(+). Its function is as follows. Quinone reductase that provides resistance to thiol-specific stress caused by electrophilic quinones. Also exhibits azoreductase activity. Catalyzes the reductive cleavage of the azo bond in aromatic azo compounds to the corresponding amines. The polypeptide is FMN-dependent NADH:quinone oxidoreductase 5 (Pseudomonas fluorescens (strain ATCC BAA-477 / NRRL B-23932 / Pf-5)).